We begin with the raw amino-acid sequence, 137 residues long: TM2 domain-containing protein DDB_G0287015 (137 aa).

The 49-residue stretch at 9–57 (QASLVVAYLLLIFLGFFGVHRFYVGRTISGVVYLLTGGIFGIGYIVDFF) folds into the TM2 domain. 2 helical membrane passes run 12-32 (LVVA…RFYV) and 39-59 (VVYL…FFLL). The disordered stretch occupies residues 106–137 (IQPQQQQYYQQPYQQQQYQPQPYQPNSPQYQP).

This sequence belongs to the TM2 family.

It is found in the membrane. The protein is TM2 domain-containing protein DDB_G0287015 of Dictyostelium discoideum (Social amoeba).